We begin with the raw amino-acid sequence, 489 residues long: Probable cytosol aminopeptidase (489 aa).

Residues Lys255 and Asp260 each coordinate Mn(2+). The active site involves Lys267. Asp279, Asp339, and Glu341 together coordinate Mn(2+). The active site involves Arg343.

It belongs to the peptidase M17 family. Mn(2+) is required as a cofactor.

Its subcellular location is the cytoplasm. The enzyme catalyses Release of an N-terminal amino acid, Xaa-|-Yaa-, in which Xaa is preferably Leu, but may be other amino acids including Pro although not Arg or Lys, and Yaa may be Pro. Amino acid amides and methyl esters are also readily hydrolyzed, but rates on arylamides are exceedingly low.. It catalyses the reaction Release of an N-terminal amino acid, preferentially leucine, but not glutamic or aspartic acids.. Presumably involved in the processing and regular turnover of intracellular proteins. Catalyzes the removal of unsubstituted N-terminal amino acids from various peptides. The polypeptide is Probable cytosol aminopeptidase (Synechococcus sp. (strain CC9605)).